The following is a 400-amino-acid chain: Homoserine O-acetyltransferase (400 aa).

Residues Met1–Ala11 show a composition bias toward polar residues. A disordered region spans residues Met1–Pro24. Over residues His13–His23 the composition is skewed to basic and acidic residues. The region spanning Asn64–Leu373 is the AB hydrolase-1 domain. The active-site Nucleophile is the Ser169. Arg239 contributes to the substrate binding site. Catalysis depends on residues Asp335 and His368. Position 369 (Asp369) interacts with substrate.

Belongs to the AB hydrolase superfamily. MetX family. Homodimer.

The protein resides in the cytoplasm. The catalysed reaction is L-homoserine + acetyl-CoA = O-acetyl-L-homoserine + CoA. Its pathway is amino-acid biosynthesis; L-methionine biosynthesis via de novo pathway; O-acetyl-L-homoserine from L-homoserine: step 1/1. Functionally, transfers an acetyl group from acetyl-CoA to L-homoserine, forming acetyl-L-homoserine. This chain is Homoserine O-acetyltransferase, found in Rhodopseudomonas palustris (strain BisB18).